The chain runs to 180 residues: Translation machinery-associated protein 16 homolog (180 aa).

Residues 1–12 (MTNLRKELEKCK) show a composition bias toward basic and acidic residues. Positions 1 to 32 (MTNLRKELEKCKHPNSRKTKALGKKARRQNNK) are disordered. Basic residues predominate over residues 13 to 32 (HPNSRKTKALGKKARRQNNK).

It belongs to the TMA16 family.

This is Translation machinery-associated protein 16 homolog from Drosophila melanogaster (Fruit fly).